The sequence spans 76 residues: Putative snRNP Sm-like protein (76 aa).

In terms of domain architecture, Sm spans 4–76 (RPLDVIHKSL…VLAISPVEIE (73 aa)).

Belongs to the snRNP Sm proteins family.

The chain is Putative snRNP Sm-like protein from Thermococcus sibiricus (strain DSM 12597 / MM 739).